A 199-amino-acid polypeptide reads, in one-letter code: dITP/XTP pyrophosphatase (199 aa).

9 to 14 (TGNKGK) contributes to the substrate binding site. Mg(2+) contacts are provided by glutamate 41 and aspartate 70. Residue aspartate 70 is the Proton acceptor of the active site. Residues serine 71, 157–160 (FGYD), lysine 180, and 185–186 (HR) contribute to the substrate site.

Belongs to the HAM1 NTPase family. As to quaternary structure, homodimer. Requires Mg(2+) as cofactor.

It catalyses the reaction XTP + H2O = XMP + diphosphate + H(+). The catalysed reaction is dITP + H2O = dIMP + diphosphate + H(+). It carries out the reaction ITP + H2O = IMP + diphosphate + H(+). Pyrophosphatase that catalyzes the hydrolysis of nucleoside triphosphates to their monophosphate derivatives, with a high preference for the non-canonical purine nucleotides XTP (xanthosine triphosphate), dITP (deoxyinosine triphosphate) and ITP. Seems to function as a house-cleaning enzyme that removes non-canonical purine nucleotides from the nucleotide pool, thus preventing their incorporation into DNA/RNA and avoiding chromosomal lesions. The chain is dITP/XTP pyrophosphatase from Mannheimia succiniciproducens (strain KCTC 0769BP / MBEL55E).